The sequence spans 309 residues: Putative F-box protein At4g05475 (309 aa).

A disordered region spans residues 1-26 (MATSTTLQSLLMKEDEEQRNKRRTTS). In terms of domain architecture, F-box spans 37–84 (RINWVDLPPELTTSILLRLSVTDILDNARKLCRAWRRICKDPSMWRKI).

In Arabidopsis thaliana (Mouse-ear cress), this protein is Putative F-box protein At4g05475.